The chain runs to 131 residues: Small ribosomal subunit protein uS8 (131 aa).

This sequence belongs to the universal ribosomal protein uS8 family. As to quaternary structure, part of the 30S ribosomal subunit. Contacts proteins S5 and S12.

In terms of biological role, one of the primary rRNA binding proteins, it binds directly to 16S rRNA central domain where it helps coordinate assembly of the platform of the 30S subunit. In Dechloromonas aromatica (strain RCB), this protein is Small ribosomal subunit protein uS8.